Here is a 73-residue protein sequence, read N- to C-terminus: MIYKVLYQKDKIVNPRRETTQTLYMEADNMVEARTMVEDNTPYNIELIQELTGNSLTYEKEHADFKLTKFDKK.

This sequence belongs to the RNA polymerase subunit epsilon family. As to quaternary structure, RNAP is composed of a core of 2 alpha, a beta and a beta' subunit. The core is associated with a delta subunit, and at least one of epsilon or omega. When a sigma factor is associated with the core the holoenzyme is formed, which can initiate transcription.

It catalyses the reaction RNA(n) + a ribonucleoside 5'-triphosphate = RNA(n+1) + diphosphate. In terms of biological role, a non-essential component of RNA polymerase (RNAP). The sequence is that of DNA-directed RNA polymerase subunit epsilon from Lactobacillus acidophilus (strain ATCC 700396 / NCK56 / N2 / NCFM).